Here is a 475-residue protein sequence, read N- to C-terminus: Protein arginine N-methyltransferase 2 (475 aa).

Residues 167–194 are disordered; that stretch reads EFLSDDDDEEMDVDDDEEDESRDGEETG. The span at 169–194 shows a compositional bias: acidic residues; that stretch reads LSDDDDEEMDVDDDEEDESRDGEETG. In terms of domain architecture, RMT2 spans 247–475; that stretch reads LAGSQMDYLK…EDFYLPVCTF (229 aa). S-adenosyl-L-methionine-binding positions include Tyr254, Met285, 310 to 315, 331 to 333, 358 to 359, and Asp378; these read FGLGII, EAH, and WQ.

Belongs to the class I-like SAM-binding methyltransferase superfamily. RMT2 methyltransferase family. As to quaternary structure, monomer.

The protein localises to the cytoplasm. It is found in the nucleus. Functionally, S-adenosyl-L-methionine-dependent protein-arginine N-methyltransferase that methylates the delta-nitrogen atom of arginine residues to form N5-methylarginine (type IV) in target proteins. Monomethylates ribosomal protein L12. The polypeptide is Protein arginine N-methyltransferase 2 (Yarrowia lipolytica (strain CLIB 122 / E 150) (Yeast)).